The chain runs to 499 residues: Glucose-6-phosphate isomerase (499 aa).

Glutamate 352 (proton donor) is an active-site residue. Residues histidine 383 and lysine 487 contribute to the active site.

It belongs to the GPI family.

Its subcellular location is the cytoplasm. The enzyme catalyses alpha-D-glucose 6-phosphate = beta-D-fructose 6-phosphate. Its pathway is carbohydrate biosynthesis; gluconeogenesis. It functions in the pathway carbohydrate degradation; glycolysis; D-glyceraldehyde 3-phosphate and glycerone phosphate from D-glucose: step 2/4. Catalyzes the reversible isomerization of glucose-6-phosphate to fructose-6-phosphate. The chain is Glucose-6-phosphate isomerase from Legionella pneumophila (strain Paris).